The sequence spans 255 residues: Cell division protein ZapD (255 aa).

This sequence belongs to the ZapD family. As to quaternary structure, interacts with FtsZ.

The protein resides in the cytoplasm. Functionally, cell division factor that enhances FtsZ-ring assembly. Directly interacts with FtsZ and promotes bundling of FtsZ protofilaments, with a reduction in FtsZ GTPase activity. This Methylococcus capsulatus (strain ATCC 33009 / NCIMB 11132 / Bath) protein is Cell division protein ZapD.